A 346-amino-acid polypeptide reads, in one-letter code: Threonylcarbamoyl-AMP synthase (346 aa).

In terms of domain architecture, YrdC-like spans 18–205 (DPQIAQAAAL…IPVLLRPGGI (188 aa)). Thr40 serves as a coordination point for L-threonine. The ATP site is built by Arg63 and Asn67. His72 contacts L-threonine. Thr123 contacts ATP. Positions 127 and 147 each coordinate L-threonine. Positions 149 and 157 each coordinate ATP. L-threonine is bound at residue Ser187. Residues Arg201 and Tyr240 each contribute to the ATP site.

It belongs to the SUA5 family.

Its subcellular location is the cytoplasm. It carries out the reaction L-threonine + hydrogencarbonate + ATP = L-threonylcarbamoyladenylate + diphosphate + H2O. Its function is as follows. Required for the formation of a threonylcarbamoyl group on adenosine at position 37 (t(6)A37) in tRNAs that read codons beginning with adenine. Catalyzes the conversion of L-threonine, HCO(3)(-)/CO(2) and ATP to give threonylcarbamoyl-AMP (TC-AMP) as the acyladenylate intermediate, with the release of diphosphate. Is also able to catalyze the reverse reaction in vitro, i.e. the formation of ATP from TC-AMP and PPi. The chain is Threonylcarbamoyl-AMP synthase (ywlC) from Bacillus subtilis (strain 168).